We begin with the raw amino-acid sequence, 127 residues long: Aspartate 1-decarboxylase (127 aa).

The active-site Schiff-base intermediate with substrate; via pyruvic acid is Ser25. Ser25 is subject to Pyruvic acid (Ser). Thr57 contacts substrate. Tyr58 acts as the Proton donor in catalysis. Residue 73 to 75 participates in substrate binding; that stretch reads GAA.

This sequence belongs to the PanD family. As to quaternary structure, heterooctamer of four alpha and four beta subunits. Pyruvate is required as a cofactor. In terms of processing, is synthesized initially as an inactive proenzyme, which is activated by self-cleavage at a specific serine bond to produce a beta-subunit with a hydroxyl group at its C-terminus and an alpha-subunit with a pyruvoyl group at its N-terminus.

It localises to the cytoplasm. It catalyses the reaction L-aspartate + H(+) = beta-alanine + CO2. Its pathway is cofactor biosynthesis; (R)-pantothenate biosynthesis; beta-alanine from L-aspartate: step 1/1. Functionally, catalyzes the pyruvoyl-dependent decarboxylation of aspartate to produce beta-alanine. This is Aspartate 1-decarboxylase from Clostridium botulinum (strain ATCC 19397 / Type A).